The chain runs to 381 residues: Chaperone protein DnaJ (381 aa).

The J domain occupies 5 to 70; that stretch reads DYYEVLGVSR…DKKAAYDRYG (66 aa). The CR-type zinc-finger motif lies at 140–218; the sequence is GVQKTINVPA…CHGAGRVEKE (79 aa). Zn(2+) contacts are provided by Cys-153, Cys-156, Cys-170, Cys-173, Cys-192, Cys-195, Cys-206, and Cys-209. 4 CXXCXGXG motif repeats span residues 153–160, 170–177, 192–199, and 206–213; these read CDACKGTG, CPTCSGMG, CPTCNGMG, and CKVCHGAG.

This sequence belongs to the DnaJ family. Homodimer. Zn(2+) is required as a cofactor.

The protein localises to the cytoplasm. Its function is as follows. Participates actively in the response to hyperosmotic and heat shock by preventing the aggregation of stress-denatured proteins and by disaggregating proteins, also in an autonomous, DnaK-independent fashion. Unfolded proteins bind initially to DnaJ; upon interaction with the DnaJ-bound protein, DnaK hydrolyzes its bound ATP, resulting in the formation of a stable complex. GrpE releases ADP from DnaK; ATP binding to DnaK triggers the release of the substrate protein, thus completing the reaction cycle. Several rounds of ATP-dependent interactions between DnaJ, DnaK and GrpE are required for fully efficient folding. Also involved, together with DnaK and GrpE, in the DNA replication of plasmids through activation of initiation proteins. This Cereibacter sphaeroides (strain KD131 / KCTC 12085) (Rhodobacter sphaeroides) protein is Chaperone protein DnaJ.